The following is a 77-amino-acid chain: MKLIIFTGLVLFAIVSLIEAQAENEKACLPQYQVCTDAPGNCCSDLVCDCYGRYKSGARIGRNCFCLQKGVIYKRED.

The first 20 residues, 1–20 (MKLIIFTGLVLFAIVSLIEA), serve as a signal peptide directing secretion. The propeptide occupies 21-26 (QAENEK).

Belongs to the neurotoxin 19 (CSTX) family. 08 (U8-Lctx) subfamily. Contains 4 disulfide bonds. Expressed by the venom gland.

Its subcellular location is the secreted. In Lycosa singoriensis (Wolf spider), this protein is U8-lycotoxin-Ls1u.